The sequence spans 728 residues: Phosphoribosylformylglycinamidine synthase subunit PurL (728 aa).

The active site involves His-54. The ATP site is built by Tyr-57 and Lys-96. Glu-98 serves as a coordination point for Mg(2+). Residues 99 to 102 (SHNH) and Arg-121 each bind substrate. His-100 serves as the catalytic Proton acceptor. Asp-122 is a Mg(2+) binding site. Position 245 (Gln-245) interacts with substrate. Residue Asp-273 coordinates Mg(2+). A substrate-binding site is contributed by 317–319 (ETQ). ATP-binding residues include Asp-495 and Gly-532. Asn-533 is a Mg(2+) binding site. Ser-535 provides a ligand contact to substrate.

This sequence belongs to the FGAMS family. As to quaternary structure, monomer. Part of the FGAM synthase complex composed of 1 PurL, 1 PurQ and 2 PurS subunits.

The protein resides in the cytoplasm. It carries out the reaction N(2)-formyl-N(1)-(5-phospho-beta-D-ribosyl)glycinamide + L-glutamine + ATP + H2O = 2-formamido-N(1)-(5-O-phospho-beta-D-ribosyl)acetamidine + L-glutamate + ADP + phosphate + H(+). It participates in purine metabolism; IMP biosynthesis via de novo pathway; 5-amino-1-(5-phospho-D-ribosyl)imidazole from N(2)-formyl-N(1)-(5-phospho-D-ribosyl)glycinamide: step 1/2. Part of the phosphoribosylformylglycinamidine synthase complex involved in the purines biosynthetic pathway. Catalyzes the ATP-dependent conversion of formylglycinamide ribonucleotide (FGAR) and glutamine to yield formylglycinamidine ribonucleotide (FGAM) and glutamate. The FGAM synthase complex is composed of three subunits. PurQ produces an ammonia molecule by converting glutamine to glutamate. PurL transfers the ammonia molecule to FGAR to form FGAM in an ATP-dependent manner. PurS interacts with PurQ and PurL and is thought to assist in the transfer of the ammonia molecule from PurQ to PurL. In Macrococcus caseolyticus (strain JCSC5402) (Macrococcoides caseolyticum), this protein is Phosphoribosylformylglycinamidine synthase subunit PurL.